We begin with the raw amino-acid sequence, 562 residues long: Arginine--tRNA ligase 1 (562 aa).

The 'HIGH' region motif lies at 122–132; sequence PNIAKPFSMGH.

Belongs to the class-I aminoacyl-tRNA synthetase family. Monomer.

The protein localises to the cytoplasm. It carries out the reaction tRNA(Arg) + L-arginine + ATP = L-arginyl-tRNA(Arg) + AMP + diphosphate. In Bacillus cereus (strain ZK / E33L), this protein is Arginine--tRNA ligase 1.